A 105-amino-acid chain; its full sequence is Nucleoid-associated protein RPE_4812 (105 aa).

The protein belongs to the YbaB/EbfC family. In terms of assembly, homodimer.

The protein resides in the cytoplasm. The protein localises to the nucleoid. Binds to DNA and alters its conformation. May be involved in regulation of gene expression, nucleoid organization and DNA protection. In Rhodopseudomonas palustris (strain BisA53), this protein is Nucleoid-associated protein RPE_4812.